We begin with the raw amino-acid sequence, 437 residues long: tRNA modification GTPase MnmE (437 aa).

The (6S)-5-formyl-5,6,7,8-tetrahydrofolate site is built by arginine 21, glutamate 80, and arginine 120. The region spanning 218 to 361 (GFVVVLAGPP…LLDRVAAAAG (144 aa)) is the TrmE-type G domain. Asparagine 228 serves as a coordination point for K(+). GTP-binding positions include 228 to 233 (NAGKST), 247 to 253 (SPIPGTT), and 272 to 275 (DTAG). Serine 232 is a binding site for Mg(2+). The K(+) site is built by serine 247, isoleucine 249, and threonine 252. Residue threonine 253 participates in Mg(2+) binding. Lysine 437 contacts (6S)-5-formyl-5,6,7,8-tetrahydrofolate.

This sequence belongs to the TRAFAC class TrmE-Era-EngA-EngB-Septin-like GTPase superfamily. TrmE GTPase family. Homodimer. Heterotetramer of two MnmE and two MnmG subunits. The cofactor is K(+).

The protein localises to the cytoplasm. In terms of biological role, exhibits a very high intrinsic GTPase hydrolysis rate. Involved in the addition of a carboxymethylaminomethyl (cmnm) group at the wobble position (U34) of certain tRNAs, forming tRNA-cmnm(5)s(2)U34. This is tRNA modification GTPase MnmE from Methylobacterium sp. (strain 4-46).